Reading from the N-terminus, the 235-residue chain is tRNA (guanine-N(7)-)-methyltransferase (235 aa).

Residues Gly-60, Glu-83–Ile-84, Asn-116–Ala-117, and Leu-136 each bind S-adenosyl-L-methionine. Residue Asp-139 is part of the active site. Ser-214–Glu-216 contacts S-adenosyl-L-methionine.

The protein belongs to the class I-like SAM-binding methyltransferase superfamily. TrmB family.

It is found in the nucleus. The catalysed reaction is guanosine(46) in tRNA + S-adenosyl-L-methionine = N(7)-methylguanosine(46) in tRNA + S-adenosyl-L-homocysteine. It functions in the pathway tRNA modification; N(7)-methylguanine-tRNA biosynthesis. Its function is as follows. Catalyzes the formation of N(7)-methylguanine at position 46 (m7G46) in tRNA. This is tRNA (guanine-N(7)-)-methyltransferase from Anopheles gambiae (African malaria mosquito).